We begin with the raw amino-acid sequence, 375 residues long: Delta(12) fatty acid dehydrogenase (375 aa).

2 helical membrane-spanning segments follow: residues 54-74 (IIAYIFYFLADKYIPILPAPL) and 77-97 (LAWPLYWFCQASILTGLWVIG). Positions 98-102 (HECGH) match the Histidine box-1 motif. The chain crosses the membrane as a helical span at residues 110-130 (WVDDTVGFILHSFLMTPYFSW). The Histidine box-2 motif lies at 134-138 (HRNHH). The next 3 helical transmembrane spans lie at 172-192 (LLIMFITFTLGFPLYLFTNIS), 218-238 (VLLSDLGLLAVLYGVKLAVAA), and 242-262 (AWVTCIYGIPVLGVFIFFDII). The Histidine box-3 motif lies at 308–312 (HVMHH).

This sequence belongs to the fatty acid desaturase type 1 family. The cofactor is Fe cation. As to expression, seed.

It localises to the membrane. It catalyses the reaction a (9Z,12Z)-octadecadienoyl-containing glycerolipid + 2 Fe(II)-[cytochrome b5] + O2 + 2 H(+) = a (9Z)-octadec-9-en-12-ynoyl-containing glycerolipid + 2 Fe(III)-[cytochrome b5] + 2 H2O. It participates in lipid metabolism; polyunsaturated fatty acid biosynthesis. Changes the delta-12 double bond of linoleic acid into a triple bond in the biosynthesis of crepenynic acid. In Crepis alpina (Hawksbeard), this protein is Delta(12) fatty acid dehydrogenase.